The following is an 859-amino-acid chain: Bifunctional levopimaradiene synthase, chloroplastic (859 aa).

Residues 1–70 constitute a chloroplast transit peptide; it reads MALLSSSLSS…IACVGEDSLS (70 aa). Lys259 lines the substrate pocket. 2 residues coordinate Mg(2+): Asp392 and Asp394. The DXDD motif signature appears at 392-395; the sequence is DIDD. Position 479 (Lys479) interacts with substrate. The Mg(2+) site is built by Asp611, Asp615, Asn755, Thr759, and Glu763. A DDXXD motif motif is present at residues 611 to 615; that stretch reads DDLYD.

It belongs to the terpene synthase family. Tpsd subfamily. Mg(2+) serves as cofactor.

Its subcellular location is the plastid. The protein localises to the chloroplast. It carries out the reaction (2E,6E,10E)-geranylgeranyl diphosphate = (+)-copalyl diphosphate. The enzyme catalyses (+)-copalyl diphosphate = abieta-8(14),12-diene + diphosphate. It participates in terpene metabolism; oleoresin biosynthesis. In terms of biological role, involved in defensive oleoresin formation in conifers in response to insect attack or other injury. Involved in diterpene (C20) olefins biosynthesis. Bifunctional enzyme that catalyzes two sequential cyclizations of geranylgeranyl diphosphate (GGPP) to levopimaradiene. Levopimaradiene is the major products of the enzyme followed by abietadiene, neoabietadiene and palustradiene. The sequence is that of Bifunctional levopimaradiene synthase, chloroplastic (TPS-LAS) from Picea abies (Norway spruce).